The sequence spans 372 residues: Putative KilA-N domain-containing protein L32 (372 aa).

Residues 1-12 (MPHKAPKSKLFR) show a composition bias toward basic residues. Positions 1 to 129 (MPHKAPKSKL…SDNDKSKDNF (129 aa)) are disordered. Over residues 14-36 (RYVEDSDDETRGRSRNRSVEKSR) the composition is skewed to basic and acidic residues. A compositionally biased stretch (basic residues) spans 37–53 (SKSLTRSKSKSPKKSRS). Residues 79–120 (EDSEDSEDSESDQDDDKSDNEQSDSELDDSESDDDETDDNES) are compositionally biased toward acidic residues. A KilA-N domain is found at 151 to 255 (KFAIGKFGDF…IKIGEWIEEW (105 aa)).

This chain is Putative KilA-N domain-containing protein L32, found in Acanthamoeba polyphaga (Amoeba).